The chain runs to 1690 residues: DNA-directed RNA polymerase subunit beta' (1690 aa).

Residues Cys63, Cys65, Cys78, and Cys81 each coordinate Zn(2+). The Mg(2+) site is built by Asp753, Asp755, and Asp757. Zn(2+)-binding residues include Cys1107, Cys1295, Cys1302, and Cys1305.

Belongs to the RNA polymerase beta' chain family. As to quaternary structure, the RNAP catalytic core consists of 2 alpha, 1 beta, 1 beta' and 1 omega subunit. When a sigma factor is associated with the core the holoenzyme is formed, which can initiate transcription. Mg(2+) is required as a cofactor. Zn(2+) serves as cofactor.

It carries out the reaction RNA(n) + a ribonucleoside 5'-triphosphate = RNA(n+1) + diphosphate. Functionally, DNA-dependent RNA polymerase catalyzes the transcription of DNA into RNA using the four ribonucleoside triphosphates as substrates. The chain is DNA-directed RNA polymerase subunit beta' from Thermotoga petrophila (strain ATCC BAA-488 / DSM 13995 / JCM 10881 / RKU-1).